Reading from the N-terminus, the 517-residue chain is Probable bifunctional methylthioribulose-1-phosphate dehydratase/enolase-phosphatase E1 1 (517 aa).

The segment at 1 to 240 (MAAAALNGLK…AIKLYQLGLD (240 aa)) is methylthioribulose-1-phosphate dehydratase. Residue Cys112 coordinates substrate. Positions 130 and 132 each coordinate Zn(2+). Catalysis depends on Glu155, which acts as the Proton donor/acceptor; for methylthioribulose-1-phosphate dehydratase activity. Residue His205 participates in Zn(2+) binding. Positions 278-517 (IVLDIEGTTT…FKTITSFSDI (240 aa)) are enolase-phosphatase E1. 2 residues coordinate Mg(2+): Asp281 and Glu283. Substrate contacts are provided by residues 416 to 417 (SS) and Lys450. Asp476 contacts Mg(2+).

The protein in the N-terminal section; belongs to the aldolase class II family. MtnB subfamily. In the C-terminal section; belongs to the HAD-like hydrolase superfamily. MasA/MtnC family. Zn(2+) serves as cofactor. The cofactor is Mg(2+).

It catalyses the reaction 5-(methylsulfanyl)-D-ribulose 1-phosphate = 5-methylsulfanyl-2,3-dioxopentyl phosphate + H2O. The enzyme catalyses 5-methylsulfanyl-2,3-dioxopentyl phosphate + H2O = 1,2-dihydroxy-5-(methylsulfanyl)pent-1-en-3-one + phosphate. Its pathway is amino-acid biosynthesis; L-methionine biosynthesis via salvage pathway; L-methionine from S-methyl-5-thio-alpha-D-ribose 1-phosphate: step 2/6. It participates in amino-acid biosynthesis; L-methionine biosynthesis via salvage pathway; L-methionine from S-methyl-5-thio-alpha-D-ribose 1-phosphate: step 3/6. The protein operates within amino-acid biosynthesis; L-methionine biosynthesis via salvage pathway; L-methionine from S-methyl-5-thio-alpha-D-ribose 1-phosphate: step 4/6. The chain is Probable bifunctional methylthioribulose-1-phosphate dehydratase/enolase-phosphatase E1 1 from Vitis vinifera (Grape).